A 297-amino-acid polypeptide reads, in one-letter code: Ribosomal RNA small subunit methyltransferase H (297 aa).

S-adenosyl-L-methionine-binding positions include 35 to 37, D55, F82, D100, and Q107; that span reads GGH.

Belongs to the methyltransferase superfamily. RsmH family.

It is found in the cytoplasm. The enzyme catalyses cytidine(1402) in 16S rRNA + S-adenosyl-L-methionine = N(4)-methylcytidine(1402) in 16S rRNA + S-adenosyl-L-homocysteine + H(+). Specifically methylates the N4 position of cytidine in position 1402 (C1402) of 16S rRNA. The sequence is that of Ribosomal RNA small subunit methyltransferase H from Chlamydia caviae (strain ATCC VR-813 / DSM 19441 / 03DC25 / GPIC) (Chlamydophila caviae).